A 554-amino-acid polypeptide reads, in one-letter code: Phenylalanine--tRNA ligase beta subunit (554 aa).

In terms of domain architecture, B5 spans 276-351 (LTPKSRIISV…INYGYEKFDG (76 aa)). Residues aspartate 329, aspartate 335, glutamate 338, and glutamate 339 each contribute to the Mg(2+) site.

It belongs to the phenylalanyl-tRNA synthetase beta subunit family. Type 2 subfamily. In terms of assembly, tetramer of two alpha and two beta subunits. Mg(2+) serves as cofactor.

It is found in the cytoplasm. It catalyses the reaction tRNA(Phe) + L-phenylalanine + ATP = L-phenylalanyl-tRNA(Phe) + AMP + diphosphate + H(+). This Methanococcus maripaludis (strain DSM 14266 / JCM 13030 / NBRC 101832 / S2 / LL) protein is Phenylalanine--tRNA ligase beta subunit.